The primary structure comprises 855 residues: tRNA(Met) cytidine acetyltransferase TmcA (855 aa).

ATP contacts are provided by residues Gln-260, Gly-286 to Ile-295, and Arg-438. In terms of domain architecture, N-acetyltransferase spans Pro-480 to Pro-663. Residues Ile-590–Thr-592, Met-597–Ser-603, Glu-630, and Arg-637 contribute to the acetyl-CoA site.

The protein belongs to the RNA cytidine acetyltransferase family. TmcA subfamily.

Its subcellular location is the cytoplasm. The enzyme catalyses cytidine(34) in elongator tRNA(Met) + acetyl-CoA + ATP + H2O = N(4)-acetylcytidine(34) in elongator tRNA(Met) + ADP + phosphate + CoA + H(+). In terms of biological role, catalyzes the formation of N(4)-acetylcytidine (ac(4)C) at the wobble position of tRNA(Met), by using acetyl-CoA as an acetyl donor and ATP (or GTP). In Methanopyrus kandleri (strain AV19 / DSM 6324 / JCM 9639 / NBRC 100938), this protein is tRNA(Met) cytidine acetyltransferase TmcA.